Reading from the N-terminus, the 311-residue chain is Transcription factor MafB (311 aa).

2 disordered regions span residues P35–Q78 and E150–F199. The span at S54–T76 shows a compositional bias: low complexity. The span at H157–Q167 shows a compositional bias: basic residues. Over residues A168–S194 the composition is skewed to low complexity. The tract at residues R226 to K251 is basic motif. Residues R226–L289 form the bZIP domain. The interval L254–L275 is leucine-zipper.

Belongs to the bZIP family. Maf subfamily. As to quaternary structure, homodimer or heterodimer with other bHLH-Zip transcription factors. Binds DNA as a homodimer or heterodimer. Self-associates; the interaction requires the intact MAFB leucine-zipper domain. Interacts with FOS, HOXD12 and PRRX1. In terms of tissue distribution, expressed in brain, thymus, gut, lung, mesenterium, spleen, kidney, ovary and bursa.

It localises to the nucleus. In terms of biological role, acts as a transcriptional activator or repressor. Positively regulates the expression of alpha-A crystallin genes during lens fiber cell differentiation. Binds to Maf recognition elements (MARE). In Gallus gallus (Chicken), this protein is Transcription factor MafB (MAFB).